The sequence spans 724 residues: MAFVSRIRRQSDYNTYPSSIPIVIDNGASYFRIGWAGETEPRVVFRNIVQRPRHKATGETVTIVGDLDPSMMKYFDCTRSGPRSPFDSNVVYQFEIMEYILDYAFDRLGANGSGIDHPILITECACNPVQSRSKMAELLFETYGVPAVAFGVDAAFSYKYNQLHGICKKDGIVLCPGFTTTHSIPFVDGEPIYKGSSRTNIGGYHVTDYLKQLLSLKYPFHSSRFTWEKAEDLKLEHCYIAPDYASEIRLFQEGRKEAEEKTSYWQLPWIPPPTEVPPSEEEIARKAAIREKQGQRLREMAEAKRVSKINDMENQLISLRFLLKQVDQVEEDDIPTFLSDTGYASRQELESTITKVTQSLRKARGEPKNEPAEYEENPDSLNNEKYPLMNVPDDILTPEQLKDKKRQMFLKTTAEGRLRARQKRNEEELEKEKRNQLEEERRRENPESYLEELQAQYKEVLERVEQKKRLKTNGSSNGNNKSGGIGRGERLSAAQRERMRLLTTAAFDRGKGEDTFGSRDEDWQLYKLMSKDNDDDDEQPDSDEAELARLSSRLQEIDPTFVQKVEGELSQTSGEVPRVRPLTEEDYKIVIGIERFRCPEILFHPNLIGIDQVGLDEMAGTSIRRLPHDEKELEERLTSSILMTGGCSLLPGMNERLECGIRMIRPCGSPINVVRAMDPVLDAWRGASAFAANLNFLGNAFTKMDYDEKGEDWLRNYQIRYNYL.

3 disordered regions span residues 358-391 (QSLR…LMNV), 412-450 (TTAE…ESYL), and 467-488 (KKRL…IGRG). The span at 414–446 (AEGRLRARQKRNEEELEKEKRNQLEEERRRENP) shows a compositional bias: basic and acidic residues. S542 bears the Phosphoserine mark.

Belongs to the actin family. ARP5 subfamily. As to quaternary structure, component of the INO80 chromatin-remodeling complex. Interacts with EEN. As to expression, expressed ubiquitously in seedlings, roots, leaves, buds, flowers and siliques.

It is found in the nucleus. Its subcellular location is the nucleoplasm. The protein localises to the cytoplasm. Functionally, probable subunit of a chromatin-remodeling complex. Involved in DNA repair. Required for multicellular development of all organs. This is Actin-related protein 5 from Arabidopsis thaliana (Mouse-ear cress).